The primary structure comprises 128 residues: uncharacterized protein (128 aa).

Residues 1–28 (MDADDFGKKDLENGNESPKKPIFMKDWK) are compositionally biased toward basic and acidic residues. The disordered stretch occupies residues 1–30 (MDADDFGKKDLENGNESPKKPIFMKDWKNS).

The protein resides in the cytoplasm. It is found in the nucleus. This is an uncharacterized protein from Schizosaccharomyces pombe (strain 972 / ATCC 24843) (Fission yeast).